Here is a 406-residue protein sequence, read N- to C-terminus: Enoyl-[acyl-carrier-protein] reductase [NADH] (406 aa).

Residues G48–F53, F74–E75, D111–A112, and I140–A141 each bind NAD(+). Y226 contributes to the substrate binding site. Y236 (proton donor) is an active-site residue. Residues K245 and L275–T277 each bind NAD(+).

This sequence belongs to the TER reductase family. In terms of assembly, monomer.

The enzyme catalyses a 2,3-saturated acyl-[ACP] + NAD(+) = a (2E)-enoyl-[ACP] + NADH + H(+). Its pathway is lipid metabolism; fatty acid biosynthesis. In terms of biological role, involved in the final reduction of the elongation cycle of fatty acid synthesis (FAS II). Catalyzes the reduction of a carbon-carbon double bond in an enoyl moiety that is covalently linked to an acyl carrier protein (ACP). The polypeptide is Enoyl-[acyl-carrier-protein] reductase [NADH] (Coxiella burnetii (strain RSA 331 / Henzerling II)).